Reading from the N-terminus, the 293-residue chain is Nucleotide-binding protein LBA0691 (293 aa).

ATP is bound at residue Gly13–Thr20. Residue Asp63–Val66 participates in GTP binding.

This sequence belongs to the RapZ-like family.

Its function is as follows. Displays ATPase and GTPase activities. This chain is Nucleotide-binding protein LBA0691, found in Lactobacillus acidophilus (strain ATCC 700396 / NCK56 / N2 / NCFM).